Consider the following 152-residue polypeptide: Deoxyuridine 5'-triphosphate nucleotidohydrolase (152 aa).

Residues 71 to 73, N84, 88 to 90, and M98 contribute to the substrate site; these read RSG and LID.

The protein belongs to the dUTPase family. Mg(2+) serves as cofactor.

It catalyses the reaction dUTP + H2O = dUMP + diphosphate + H(+). It functions in the pathway pyrimidine metabolism; dUMP biosynthesis; dUMP from dCTP (dUTP route): step 2/2. This enzyme is involved in nucleotide metabolism: it produces dUMP, the immediate precursor of thymidine nucleotides and it decreases the intracellular concentration of dUTP so that uracil cannot be incorporated into DNA. The polypeptide is Deoxyuridine 5'-triphosphate nucleotidohydrolase (Shewanella denitrificans (strain OS217 / ATCC BAA-1090 / DSM 15013)).